The chain runs to 379 residues: Cytochrome b (379 aa).

4 helical membrane passes run 33–53, 77–98, 113–133, and 178–198; these read FGSL…FLDM, WLIR…YLHI, WNIG…GYVL, and FFAF…VHLL. Positions 83 and 97 each coordinate heme b. Heme b contacts are provided by His-182 and His-196. His-201 is an a ubiquinone binding site. The next 4 membrane-spanning stretches (helical) occupy residues 226–246, 288–308, 320–340, and 347–367; these read TKDF…VPFF, LGGV…PHIQ, ISQF…WIGG, and FIII…VLMP.

Belongs to the cytochrome b family. The cytochrome bc1 complex contains 11 subunits: 3 respiratory subunits (MT-CYB, CYC1 and UQCRFS1), 2 core proteins (UQCRC1 and UQCRC2) and 6 low-molecular weight proteins (UQCRH/QCR6, UQCRB/QCR7, UQCRQ/QCR8, UQCR10/QCR9, UQCR11/QCR10 and a cleavage product of UQCRFS1). This cytochrome bc1 complex then forms a dimer. Heme b is required as a cofactor.

The protein resides in the mitochondrion inner membrane. Its function is as follows. Component of the ubiquinol-cytochrome c reductase complex (complex III or cytochrome b-c1 complex) that is part of the mitochondrial respiratory chain. The b-c1 complex mediates electron transfer from ubiquinol to cytochrome c. Contributes to the generation of a proton gradient across the mitochondrial membrane that is then used for ATP synthesis. The protein is Cytochrome b (MT-CYB) of Dipodomys nelsoni (Nelson's kangaroo rat).